Consider the following 926-residue polypeptide: Coatomer subunit beta'-2 (926 aa).

WD repeat units lie at residues 13–52, 55–94, 97–136, 140–180, 183–224, 227–266, 269–309, 351–390, and 461–501; these read QRSERVKSVDLHPTEPWILASLYSGTLCIWNYQTQVMAKS, VTELPVRSAKFVARKQWVVAGADDMYIRVYNYNTMDKVKV, AHSDYIRCVAVHPTLPYVLSSSDDMLIKLWDWEKGWACTQ, GHSH…PNFT, AHQK…CVQT, GHTHNVSAVCFHPELPIIITGSEDGTVRIWHATTYRLENT, YGLE…ASMD, TCDLYPQSLKHNPNGRFVVVCGDGEYIIYTALAWRNRSFG, and RIDV…SHFD. The interval 847–926 is disordered; sequence EEESLENGDM…GTNNEGNPSA (80 aa). Basic and acidic residues predominate over residues 868–887; sequence NEQRNEDDVAEHVEEHHEEK. Acidic residues predominate over residues 888 to 900; the sequence is EAEEEEGIVDGDS. Polar residues predominate over residues 917–926; the sequence is GTNNEGNPSA.

Belongs to the WD repeat COPB2 family. In terms of assembly, oligomeric complex that consists of at least the alpha, beta, beta', gamma, delta, epsilon and zeta subunits.

The protein localises to the cytoplasm. It is found in the golgi apparatus membrane. It localises to the cytoplasmic vesicle. Its subcellular location is the COPI-coated vesicle membrane. In terms of biological role, the coatomer is a cytosolic protein complex that binds to dilysine motifs and reversibly associates with Golgi non-clathrin-coated vesicles, which further mediate biosynthetic protein transport from the ER, via the Golgi up to the trans Golgi network. Coatomer complex is required for budding from Golgi membranes, and is essential for the retrograde Golgi-to-ER transport of dilysine-tagged proteins. This is Coatomer subunit beta'-2 from Arabidopsis thaliana (Mouse-ear cress).